We begin with the raw amino-acid sequence, 310 residues long: Glutaminase 1 (310 aa).

Substrate is bound by residues serine 66, asparagine 117, glutamate 161, asparagine 168, tyrosine 192, tyrosine 244, and valine 262. Lysine 294 carries the post-translational modification N6-acetyllysine.

Belongs to the glutaminase family. Homotetramer.

The catalysed reaction is L-glutamine + H2O = L-glutamate + NH4(+). The chain is Glutaminase 1 from Shigella flexneri.